The following is a 76-amino-acid chain: Dermaseptin-B4 (76 aa).

An N-terminal signal peptide occupies residues 1–22; it reads MAFLKKSLFLVLFLGLVSLSIC. Residues 23–43 constitute a propeptide that is removed on maturation; that stretch reads EEEKRENKDEIEQEDDEQSEE. A Glutamine amide modification is found at Gln73. Residues 75 to 76 constitute a propeptide that is removed on maturation; the sequence is EQ.

This sequence belongs to the frog skin active peptide (FSAP) family. Dermaseptin subfamily. As to expression, expressed by the skin glands.

The protein localises to the secreted. In terms of biological role, potent antimicrobial peptide with potent activity against Gram-positive and Gram-negative bacteria. Probably acts by disturbing membrane functions with its amphipathic structure. Has an activity of stimulation of insulin release, which may protect the species from being eaten by predators by causing fatal hypoglycemia. Has hemolytic activity. The sequence is that of Dermaseptin-B4 from Phyllomedusa bicolor (Two-colored leaf frog).